Consider the following 226-residue polypeptide: EEF1A lysine methyltransferase 1 (226 aa).

N-acetylserine is present on S2. At S2 the chain carries Phosphoserine.

Belongs to the class I-like SAM-binding methyltransferase superfamily. EFM5 family.

It is found in the cytoplasm. It catalyses the reaction L-lysyl-[protein] + 3 S-adenosyl-L-methionine = N(6),N(6),N(6)-trimethyl-L-lysyl-[protein] + 3 S-adenosyl-L-homocysteine + 3 H(+). Functionally, protein-lysine methyltransferase that selectively catalyzes the trimethylation of EEF1A at 'Lys-79'. The chain is EEF1A lysine methyltransferase 1 from Bos taurus (Bovine).